The primary structure comprises 204 residues: MSEFSYVHTRGWVEVVVGSMFSGKTEELIRRLRRAEFARLQIQVFKPIIDKRYNEMAVTSHDLTTIDSTPIHDAEEIWNLLKPNTKVVGIDEGQFFGQNLVQIAQDLADRGLRVIIAGLDTDWQGKPFEPMPTLMAVAESVTKQHAVCVVCGAPASRTQRTAGGDGQVLVGTHDAYEARCRQHFKPEVDAPTLDWKLKREMEIS.

Residues 18–25 (GSMFSGKT) and 91–94 (DEGQ) each bind ATP. Catalysis depends on glutamate 92, which acts as the Proton acceptor. The Zn(2+) site is built by cysteine 148, cysteine 151, cysteine 180, and histidine 183.

It belongs to the thymidine kinase family. In terms of assembly, homotetramer.

Its subcellular location is the cytoplasm. It carries out the reaction thymidine + ATP = dTMP + ADP + H(+). The polypeptide is Thymidine kinase (Bdellovibrio bacteriovorus (strain ATCC 15356 / DSM 50701 / NCIMB 9529 / HD100)).